The following is a 215-amino-acid chain: Thymidylate kinase (215 aa).

Position 13-20 (13-20 (GLEGAGKS)) interacts with ATP.

The protein belongs to the thymidylate kinase family.

It catalyses the reaction dTMP + ATP = dTDP + ADP. In terms of biological role, phosphorylation of dTMP to form dTDP in both de novo and salvage pathways of dTTP synthesis. The sequence is that of Thymidylate kinase from Shewanella frigidimarina (strain NCIMB 400).